The following is a 579-amino-acid chain: Proline--tRNA ligase (579 aa).

This sequence belongs to the class-II aminoacyl-tRNA synthetase family. ProS type 1 subfamily. As to quaternary structure, homodimer.

It localises to the cytoplasm. It carries out the reaction tRNA(Pro) + L-proline + ATP = L-prolyl-tRNA(Pro) + AMP + diphosphate. Functionally, catalyzes the attachment of proline to tRNA(Pro) in a two-step reaction: proline is first activated by ATP to form Pro-AMP and then transferred to the acceptor end of tRNA(Pro). As ProRS can inadvertently accommodate and process non-cognate amino acids such as alanine and cysteine, to avoid such errors it has two additional distinct editing activities against alanine. One activity is designated as 'pretransfer' editing and involves the tRNA(Pro)-independent hydrolysis of activated Ala-AMP. The other activity is designated 'posttransfer' editing and involves deacylation of mischarged Ala-tRNA(Pro). The misacylated Cys-tRNA(Pro) is not edited by ProRS. The polypeptide is Proline--tRNA ligase (Chlamydia muridarum (strain MoPn / Nigg)).